Here is a 471-residue protein sequence, read N- to C-terminus: Argininosuccinate lyase (471 aa).

Belongs to the lyase 1 family. Argininosuccinate lyase subfamily.

Its subcellular location is the cytoplasm. The catalysed reaction is 2-(N(omega)-L-arginino)succinate = fumarate + L-arginine. It participates in amino-acid biosynthesis; L-arginine biosynthesis; L-arginine from L-ornithine and carbamoyl phosphate: step 3/3. The protein is Argininosuccinate lyase of Cereibacter sphaeroides (strain ATCC 17023 / DSM 158 / JCM 6121 / CCUG 31486 / LMG 2827 / NBRC 12203 / NCIMB 8253 / ATH 2.4.1.) (Rhodobacter sphaeroides).